The sequence spans 94 residues: Small ribosomal subunit protein uS19 (94 aa).

Belongs to the universal ribosomal protein uS19 family.

Its function is as follows. Protein S19 forms a complex with S13 that binds strongly to the 16S ribosomal RNA. This Desulforamulus reducens (strain ATCC BAA-1160 / DSM 100696 / MI-1) (Desulfotomaculum reducens) protein is Small ribosomal subunit protein uS19.